The chain runs to 293 residues: Ribosomal protein L11 methyltransferase (293 aa).

Threonine 145, glycine 166, aspartate 188, and asparagine 230 together coordinate S-adenosyl-L-methionine.

It belongs to the methyltransferase superfamily. PrmA family.

The protein localises to the cytoplasm. It catalyses the reaction L-lysyl-[protein] + 3 S-adenosyl-L-methionine = N(6),N(6),N(6)-trimethyl-L-lysyl-[protein] + 3 S-adenosyl-L-homocysteine + 3 H(+). Functionally, methylates ribosomal protein L11. The protein is Ribosomal protein L11 methyltransferase of Shewanella denitrificans (strain OS217 / ATCC BAA-1090 / DSM 15013).